The sequence spans 78 residues: ATP synthase subunit c (78 aa).

The next 2 membrane-spanning stretches (helical) occupy residues 11-31 (FIGA…VGHV) and 53-73 (LFIG…VALL).

This sequence belongs to the ATPase C chain family. As to quaternary structure, F-type ATPases have 2 components, F(1) - the catalytic core - and F(0) - the membrane proton channel. F(1) has five subunits: alpha(3), beta(3), gamma(1), delta(1), epsilon(1). F(0) has four main subunits: a(1), b(1), b'(1) and c(10-14). The alpha and beta chains form an alternating ring which encloses part of the gamma chain. F(1) is attached to F(0) by a central stalk formed by the gamma and epsilon chains, while a peripheral stalk is formed by the delta, b and b' chains.

The protein localises to the cell inner membrane. F(1)F(0) ATP synthase produces ATP from ADP in the presence of a proton or sodium gradient. F-type ATPases consist of two structural domains, F(1) containing the extramembraneous catalytic core and F(0) containing the membrane proton channel, linked together by a central stalk and a peripheral stalk. During catalysis, ATP synthesis in the catalytic domain of F(1) is coupled via a rotary mechanism of the central stalk subunits to proton translocation. Functionally, key component of the F(0) channel; it plays a direct role in translocation across the membrane. A homomeric c-ring of between 10-14 subunits forms the central stalk rotor element with the F(1) delta and epsilon subunits. In Jannaschia sp. (strain CCS1), this protein is ATP synthase subunit c.